We begin with the raw amino-acid sequence, 27 residues long: Superoxide dismutase [Mn] (27 aa).

It belongs to the iron/manganese superoxide dismutase family. As to quaternary structure, homodimer. It depends on Mn(2+) as a cofactor.

It carries out the reaction 2 superoxide + 2 H(+) = H2O2 + O2. Functionally, destroys superoxide anion radicals which are normally produced within the cells and which are toxic to biological systems. This Desulfovibrio desulfuricans protein is Superoxide dismutase [Mn] (sodA).